The following is a 214-amino-acid chain: UPF0301 protein blr1492 (214 aa).

The segment at 1–22 (MAPTGKRTGESTRSTGPAPPSS) is disordered.

The protein belongs to the UPF0301 (AlgH) family.

This is UPF0301 protein blr1492 from Bradyrhizobium diazoefficiens (strain JCM 10833 / BCRC 13528 / IAM 13628 / NBRC 14792 / USDA 110).